The following is a 490-amino-acid chain: Betaine aldehyde dehydrogenase (490 aa).

Residues Thr26, Ile27, and Asp93 each contribute to the K(+) site. Residue 150–152 (GAW) coordinates NAD(+). Lys162 serves as the catalytic Charge relay system. An NAD(+)-binding site is contributed by 176 to 179 (KPSE). Residue Val180 coordinates K(+). 230–233 (GVAS) contributes to the NAD(+) binding site. A K(+)-binding site is contributed by Leu246. Glu252 acts as the Proton acceptor in catalysis. NAD(+)-binding residues include Gly254, Cys286, and Glu387. Cys286 serves as the catalytic Nucleophile. Cys286 is modified (cysteine sulfenic acid (-SOH)). K(+) is bound by residues Lys457 and Gly460. Glu464 (charge relay system) is an active-site residue.

The protein belongs to the aldehyde dehydrogenase family. Dimer of dimers. K(+) serves as cofactor.

It catalyses the reaction betaine aldehyde + NAD(+) + H2O = glycine betaine + NADH + 2 H(+). The protein operates within amine and polyamine biosynthesis; betaine biosynthesis via choline pathway; betaine from betaine aldehyde: step 1/1. Involved in the biosynthesis of the osmoprotectant glycine betaine. Catalyzes the irreversible oxidation of betaine aldehyde to the corresponding acid. This Escherichia coli O8 (strain IAI1) protein is Betaine aldehyde dehydrogenase.